The chain runs to 385 residues: 8-amino-7-oxononanoate synthase (385 aa).

R27 provides a ligand contact to substrate. 105-106 lines the pyridoxal 5'-phosphate pocket; that stretch reads GY. H130 lines the substrate pocket. Pyridoxal 5'-phosphate contacts are provided by residues S176, 201-204, and 232-235; these read DEAH and TMSK. K235 carries the N6-(pyridoxal phosphate)lysine modification. Position 345 (T345) interacts with substrate.

This sequence belongs to the class-II pyridoxal-phosphate-dependent aminotransferase family. BioF subfamily. As to quaternary structure, homodimer. The cofactor is pyridoxal 5'-phosphate.

It carries out the reaction 6-carboxyhexanoyl-[ACP] + L-alanine + H(+) = (8S)-8-amino-7-oxononanoate + holo-[ACP] + CO2. It functions in the pathway cofactor biosynthesis; biotin biosynthesis. Its function is as follows. Catalyzes the decarboxylative condensation of pimeloyl-[acyl-carrier protein] and L-alanine to produce 8-amino-7-oxononanoate (AON), [acyl-carrier protein], and carbon dioxide. The polypeptide is 8-amino-7-oxononanoate synthase (Mycobacterium leprae (strain Br4923)).